A 151-amino-acid chain; its full sequence is HTH-type transcriptional regulator TcaR (151 aa).

Residues 1-142 (MVKHLQDHIQ…VRQVLEVINH (142 aa)) enclose the HTH marR-type domain. Positions 54–77 (ISEITQRQGVNKAAVSRRIKKLID) form a DNA-binding region, H-T-H motif.

Functionally, involved in the antibiotic teicoplanin susceptibility. Inactivation of the tcaRAB operon leads to teicoplanin resistance. Its function is as follows. Is a weak negative regulator of transcription of the icaABD operon. This chain is HTH-type transcriptional regulator TcaR (tcaR), found in Staphylococcus aureus (strain COL).